The following is a 197-amino-acid chain: RNA-binding protein Rsf1 (197 aa).

The region spanning 7–80 (TRVYVGNLTD…SQLRVEISKG (74 aa)) is the RRM domain. The disordered stretch occupies residues 74–197 (RVEISKGRPR…SRSPVGNHRF (124 aa)). The span at 89-102 (GPMDRGGRRGDFGR) shows a compositional bias: basic and acidic residues. A Phosphothreonine modification is found at Thr-106. Low complexity-rich tracts occupy residues 117–144 (QRGSSGSSSRHTERGYSSGRSGASSYNG) and 166–176 (RYSSGSSASYG). 5 positions are modified to phosphoserine: Ser-168, Ser-171, Ser-174, Ser-188, and Ser-190.

The protein belongs to the splicing factor SR family. Extensively phosphorylated on serine residues in the RS domain.

Its subcellular location is the nucleus. Functionally, may control important aspects of development. The protein is RNA-binding protein Rsf1 (Rsf1) of Drosophila melanogaster (Fruit fly).